The following is a 316-amino-acid chain: L-lactate dehydrogenase (316 aa).

NAD(+) contacts are provided by residues V16, D37, K42, Y68, and 82-83; that span reads GA. Substrate-binding residues include Q85 and R91. Residues S104, 121-123, and S146 contribute to the NAD(+) site; that span reads AAN. 123–126 is a substrate binding site; the sequence is NPVD. 151 to 154 provides a ligand contact to substrate; it reads DSAR. Beta-D-fructose 1,6-bisphosphate contacts are provided by R156 and H171. Residue H178 is the Proton acceptor of the active site. Y222 carries the phosphotyrosine modification. T231 lines the substrate pocket.

It belongs to the LDH/MDH superfamily. LDH family. As to quaternary structure, homotetramer.

The protein localises to the cytoplasm. The catalysed reaction is (S)-lactate + NAD(+) = pyruvate + NADH + H(+). The protein operates within fermentation; pyruvate fermentation to lactate; (S)-lactate from pyruvate: step 1/1. Its activity is regulated as follows. Allosterically activated by fructose 1,6-bisphosphate (FBP). In terms of biological role, catalyzes the conversion of lactate to pyruvate. This chain is L-lactate dehydrogenase, found in Staphylococcus epidermidis (strain ATCC 12228 / FDA PCI 1200).